The primary structure comprises 397 residues: Cytochrome b (397 aa).

4 consecutive transmembrane segments (helical) span residues 38-58 (FGSL…FLAM), 82-104 (WLLR…LHIF), 119-139 (VWCL…IGYV), and 185-205 (FFSL…LHLA). Residues histidine 88 and histidine 102 each coordinate heme b. Heme b is bound by residues histidine 189 and histidine 203. Histidine 208 contributes to the a ubiquinone binding site. Transmembrane regions (helical) follow at residues 231 to 251 (FYVK…IWIF), 295 to 315 (AGGV…PFFK), 327 to 347 (IYQG…WIGC), and 354 to 373 (FVTI…AITP).

This sequence belongs to the cytochrome b family. In terms of assembly, the main subunits of complex b-c1 are: cytochrome b, cytochrome c1 and the Rieske protein. Heme b serves as cofactor.

It localises to the mitochondrion inner membrane. In terms of biological role, component of the ubiquinol-cytochrome c reductase complex (complex III or cytochrome b-c1 complex) that is part of the mitochondrial respiratory chain. The b-c1 complex mediates electron transfer from ubiquinol to cytochrome c. Contributes to the generation of a proton gradient across the mitochondrial membrane that is then used for ATP synthesis. This is Cytochrome b (MT-CYB) from Oryza sativa subsp. indica (Rice).